Reading from the N-terminus, the 216-residue chain is UDP-N-acetylglucosamine transferase subunit ALG14 (216 aa).

At 1-3 the chain is on the lumenal side; it reads MVC. A helical transmembrane segment spans residues 4–24; that stretch reads VLVLAAAAGAVAVFLILRIWV. Topologically, residues 25–216 are cytoplasmic; the sequence is VLRSMDVTPR…PKSVYLGRIV (192 aa).

Belongs to the ALG14 family. As to quaternary structure, forms with ALG13 the active heterodimeric UDP-N-acetylglucosamine transferase complex.

The protein localises to the endoplasmic reticulum membrane. In terms of biological role, part of the UDP-N-acetylglucosamine transferase complex that operates in the biosynthetic pathway of dolichol-linked oligosaccharides, the glycan precursors employed in protein asparagine (N)-glycosylation. The assembly of dolichol-linked oligosaccharides begins on the cytosolic side of the endoplasmic reticulum membrane and finishes in its lumen. The sequential addition of sugars to dolichol pyrophosphate produces dolichol-linked oligosaccharides containing fourteen sugars, including two GlcNAcs, nine mannoses and three glucoses. Once assembled, the oligosaccharides are transferred from the lipid to nascent proteins by oligosaccharyltransferases. Functions as a protein-membrane adapter recruiting ALG13 at the cytoplasmic face of the endoplasmic reticulum, where the complex catalyzes the second step of dolichol pyrophosphate biosynthesis, transferring a beta1,4-linked N-acetylglucosamine (GlcNAc) from UDP-GlcNAc to GlcNAc-pyrophosphatedolichol (Gn-PDol) to produce N,N'-diacetylchitobiosyl diphosphodolichol. N,N'-diacetylchitobiosyl diphosphodolichol is a substrate for ALG1, the following enzyme in the biosynthetic pathway. The sequence is that of UDP-N-acetylglucosamine transferase subunit ALG14 from Homo sapiens (Human).